A 321-amino-acid chain; its full sequence is MLWSVLRHILWVALLLLVLSLLGFVILLRDPLNANLVTQNIYIGYFHYLGTLLQGDFGITYNGGKSLMNLILTVLPPTLELCFITLFLAFIFGLPLGIISAVNSEQVFAKSLQILSYVGLSIPIFWLAPILLYVAALSHWEIAAIGQYNLLYEIKSITGFPVIDMWFMEVPYRTKIVQNILQHLALPTLVLCILPTMEIIRIIHQRAEYILNQNFSKVATTRGWSKWKILHQYVFRNTFPLLVPQVPRVFTLVLTQCMLVETALGWPGIGRWLINAVNEQDYNSIAAGVIVIGVCIILIDTFTKIFTFILDPFKKKGWYAK.

Helical transmembrane passes span 8-28 (HILW…VILL), 41-61 (IYIG…GITY), 82-102 (CFIT…ISAV), 117-137 (YVGL…VAAL), 150-170 (LLYE…FMEV), 180-200 (ILQH…MEII), 249-269 (VFTL…WPGI), and 289-309 (VIVI…FTFI). One can recognise an ABC transmembrane type-1 domain in the interval 75-303 (LPPTLELCFI…VCIILIDTFT (229 aa)).

Belongs to the binding-protein-dependent transport system permease family. OppBC subfamily.

It is found in the cell inner membrane. In terms of biological role, involved in a peptide intake transport system that plays a role in the resistance to antimicrobial peptides. This Haemophilus influenzae (strain ATCC 51907 / DSM 11121 / KW20 / Rd) protein is Peptide transport system permease protein SapB (sapB).